The chain runs to 144 residues: Cell division protein SepF (144 aa).

The tract at residues Asp16–Arg42 is disordered.

Belongs to the SepF family. In terms of assembly, homodimer. Interacts with FtsZ.

It is found in the cytoplasm. Cell division protein that is part of the divisome complex and is recruited early to the Z-ring. Probably stimulates Z-ring formation, perhaps through the cross-linking of FtsZ protofilaments. Its function overlaps with FtsA. The protein is Cell division protein SepF of Lactobacillus gasseri (strain ATCC 33323 / DSM 20243 / BCRC 14619 / CIP 102991 / JCM 1131 / KCTC 3163 / NCIMB 11718 / NCTC 13722 / AM63).